Consider the following 354-residue polypeptide: Tribbles homolog 3 (354 aa).

The tract at residues 1 to 127 (MRATPLAASA…QHVARPTEVL (127 aa)) is interaction with DDIT3/CHOP. A disordered region spans residues 36–61 (RDEPEPGPLPSLLPPSPPPASDLSPA). Residues 41-55 (PGPLPSLLPPSPPPA) show a composition bias toward pro residues. In terms of domain architecture, Protein kinase spans 68–315 (LGPYILLERE…ALGILLHPWL (248 aa)). Over residues 320–333 (GRVSPPQSDRREMD) the composition is skewed to basic and acidic residues. The disordered stretch occupies residues 320–354 (GRVSPPQSDRREMDQVVPDGPQLEEAEEGEVGLYG). Residues 341–354 (QLEEAEEGEVGLYG) show a composition bias toward acidic residues.

This sequence belongs to the protein kinase superfamily. CAMK Ser/Thr protein kinase family. Tribbles subfamily. In terms of assembly, interacts with AKT1, AKT2, MAP2K1 and MAP2K7. Interacts with ATF4. Interacts with DDIT3/CHOP and inhibits its interaction with EP300/P300. Interacts with APOBEC3C. Interacts (via N-terminus) with APOBEC3A. Interacts with RELA. As to expression, highly expressed in liver. Not detected in heart, brain, spleen, lung, skeletal muscle, kidney or testis.

The protein resides in the nucleus. Functionally, inactive protein kinase which acts as a regulator of the integrated stress response (ISR), a process for adaptation to various stress. Inhibits the transcriptional activity of DDIT3/CHOP and is involved in DDIT3/CHOP-dependent cell death during ER stress. May play a role in programmed neuronal cell death but does not appear to affect non-neuronal cells. Acts as a negative feedback regulator of the ATF4-dependent transcription during the ISR: while TRIB3 expression is promoted by ATF4, TRIB3 protein interacts with ATF4 and inhibits ATF4 transcription activity. Disrupts insulin signaling by binding directly to Akt kinases and blocking their activation. May bind directly to and mask the 'Thr-308' phosphorylation site in AKT1. Interacts with the NF-kappa-B transactivator p65 RELA and inhibits its phosphorylation and thus its transcriptional activation activity. Interacts with MAPK kinases and regulates activation of MAP kinases. Can inhibit APOBEC3A editing of nuclear DNA. The protein is Tribbles homolog 3 (Trib3) of Mus musculus (Mouse).